We begin with the raw amino-acid sequence, 431 residues long: MKNYIEIIDVSARQVLDSRSNPTVEVDVILEDGTTGRAAVPSGASTGIFEAVELRDGDKSVYNGKGVLKAIENVNTIIAEELVGMNVLDQIAIDKTMIELDGTDNKGKLGANAMLGVSLACAKAAAEYLGLSLYQYIGGVNAKVLPVPMMNIINGGEHADNNVDLQEFMIMPAGASSFSEALRMCSEVYHSLKSLLKAKGYDTGVGDEGGFAPNLNSNEEAIQVIVEAIEKAGYKPGVEIFIALDPASSEIFEDGKYNLKGEGKVLTPQEMVDYYANLVAKYPIISIEDGMAEEDWEGWRLITERLGTKIQLVGDDLFVTNTDRLTMGIERGVANSILIKLNQIGTLTETLNAIEMAERAGYTAVVSHRSGETEDTTIADLVVAVNAGQIKTGAPARSERVAKYNQLLRIEDELGEMGEYRGLKAFYNIKK.

Glutamine 166 lines the (2R)-2-phosphoglycerate pocket. The active-site Proton donor is glutamate 208. Positions 245, 288, and 315 each coordinate Mg(2+). Positions 340, 369, 370, and 391 each coordinate (2R)-2-phosphoglycerate. The active-site Proton acceptor is lysine 340.

The protein belongs to the enolase family. Requires Mg(2+) as cofactor.

It is found in the cytoplasm. The protein resides in the secreted. It localises to the cell surface. The catalysed reaction is (2R)-2-phosphoglycerate = phosphoenolpyruvate + H2O. Its pathway is carbohydrate degradation; glycolysis; pyruvate from D-glyceraldehyde 3-phosphate: step 4/5. Its function is as follows. Catalyzes the reversible conversion of 2-phosphoglycerate (2-PG) into phosphoenolpyruvate (PEP). It is essential for the degradation of carbohydrates via glycolysis. This Clostridium tetani (strain Massachusetts / E88) protein is Enolase.